The chain runs to 728 residues: Ribosome biogenesis protein bop1-B (728 aa).

The segment at 1 to 114 (MKRGSKRESG…ENDSSDEEDI (114 aa)) is disordered. A compositionally biased stretch (acidic residues) spans 50–67 (SGTDSSDDEEDHSSEEVQ). WD repeat units follow at residues 393–432 (GHKD…CMKS), 434–474 (VLEG…RLLC), 514–556 (KHQK…SQNP), 559–597 (KNKG…LTKK), 600–639 (TNCK…KPYK), 643–682 (HHKK…DLLQ), and 698–728 (HRDL…RLFT).

It belongs to the WD repeat BOP1/ERB1 family. In terms of assembly, component of the PeBoW complex, composed of bop1, pes1 and wdr12. The complex is held together by bop1, which interacts with pes1 via its N-terminal domain and with wdr12 via a high-affinity interaction between the seven-bladed beta-propeller domains of the 2 proteins. The PeBoW complex associates with the 66S pre-ribosome.

It localises to the nucleus. Its subcellular location is the nucleolus. The protein localises to the nucleoplasm. In terms of biological role, component of the PeBoW complex, which is required for maturation of 28S and 5.8S ribosomal RNAs and formation of the 60S ribosome. In Xenopus laevis (African clawed frog), this protein is Ribosome biogenesis protein bop1-B (bop1-b).